The chain runs to 118 residues: Na(+)/H(+) antiporter subunit G1 (118 aa).

A run of 3 helical transmembrane segments spans residues 9–29 (LAVIFVILGAIISAVTAIGII), 47–67 (LGAIFLLFGTFLYFIATDGYI), and 69–89 (MQLIFGILFILITGPLSSHLI).

Belongs to the CPA3 antiporters (TC 2.A.63) subunit G family. May form a heterooligomeric complex that consists of seven subunits: mnhA1, mnhB1, mnhC1, mnhD1, mnhE1, mnhF1 and mnhG1.

It localises to the cell membrane. Its function is as follows. Mnh complex is a Na(+)/H(+) antiporter involved in Na(+) excretion. The chain is Na(+)/H(+) antiporter subunit G1 (mnhG1) from Staphylococcus haemolyticus (strain JCSC1435).